The following is a 121-amino-acid chain: Type II secretion system protein I (121 aa).

A propeptide spans 1–6 (leader sequence); that stretch reads MNKQKG. Met7 carries the N-methylmethionine modification. Residues 7 to 27 traverse the membrane as a helical segment; it reads MTLLEVLVALAIFSLAGLTLL.

Belongs to the GSP I family. As to quaternary structure, type II secretion is composed of four main components: the outer membrane complex, the inner membrane complex, the cytoplasmic secretion ATPase and the periplasm-spanning pseudopilus. Interacts with core component PulG. Interacts with pseudopilins PulJ and PulK. Cleaved by prepilin peptidase. In terms of processing, methylated by prepilin peptidase at the amino group of the N-terminal methionine once the leader sequence is cleaved by prepilin peptidase.

Its subcellular location is the cell inner membrane. Component of the type II secretion system required for the energy-dependent secretion of extracellular factors such as proteases and toxins from the periplasm. Part of the pseudopilus tip complex that is critical for the recognition and binding of secretion substrates. The protein is Type II secretion system protein I (pulI) of Klebsiella michiganensis (strain ATCC 8724 / DSM 4798 / JCM 20051 / NBRC 3318 / NRRL B-199 / KCTC 1686 / BUCSAV 143 / CCM 1901).